We begin with the raw amino-acid sequence, 360 residues long: C-C chemokine receptor type 4 (360 aa).

The Extracellular portion of the chain corresponds to 1–39; that stretch reads MNATEVTDTTQDETVYNSYYFYESMPKPCTKEGIKAFGE. The N-linked (GlcNAc...) asparagine glycan is linked to Asn-2. The helical transmembrane segment at 40 to 67 threads the bilayer; it reads VFLPPLYSLVFLLGLFGNSVVVLVLFKY. The Cytoplasmic segment spans residues 68–77; that stretch reads KRLKSMTDVY. Residues 78-98 form a helical membrane-spanning segment; the sequence is LLNLAISDLLFVLSLPFWGYY. Topologically, residues 99–111 are extracellular; that stretch reads AADQWVFGLGLCK. A disulfide bond links Cys-110 and Cys-187. The chain crosses the membrane as a helical span at residues 112–133; that stretch reads IVSWMYLVGFYSGIFFIMLMSI. Residues 134–150 are Cytoplasmic-facing; the sequence is DRYLAIVHAVFSLKART. The helical transmembrane segment at 151–175 threads the bilayer; it reads LTYGVITSLITWSVAVFASLPGLLF. Residues 176–206 are Extracellular-facing; it reads STCYTEHNHTYCKTQYSVNSTTWKVLSSLEI. Residues Asn-183 and Asn-194 are each glycosylated (N-linked (GlcNAc...) asparagine). The chain crosses the membrane as a helical span at residues 207–226; it reads NVLGLLIPLGIMLFCYSMII. At 227–242 the chain is on the cytoplasmic side; sequence RTLQHCKNEKKNRAVR. Residues 243-267 traverse the membrane as a helical segment; the sequence is MIFAVVVLFLGFWTPYNVVLFLETL. At 268–284 the chain is on the extracellular side; it reads VELEVLQDCTLERYLDY. A helical membrane pass occupies residues 285–308; it reads AIQATETLAFIHCCLNPVIYFFLG. Topologically, residues 309–360 are cytoplasmic; it reads EKFRKYITQLFRTCRGPLVLCKHCDFLQVYSADMSSSSYTQSTVDHDFRDAL.

Belongs to the G-protein coupled receptor 1 family. Post-translationally, in natural killer cells, CCL22 binding induces phosphorylation on yet undefined Ser/Thr residues, most probably by beta-adrenergic receptor kinases 1 and 2. In terms of tissue distribution, expressed in the thymus, macrophages and T- and B-cells.

The protein localises to the cell membrane. Functionally, high affinity receptor for the C-C type chemokines CCL17/TARC and CCL22/MDC. The activity of this receptor is mediated by G(i) proteins which activate a phosphatidylinositol-calcium second messenger system. Could play a role in lipopolysaccharide (LPS)-induced endotoxic shock. In the CNS, could mediate hippocampal-neuron survival. In Mus musculus (Mouse), this protein is C-C chemokine receptor type 4 (Ccr4).